We begin with the raw amino-acid sequence, 443 residues long: Trigger factor (443 aa).

The region spanning 161 to 246 is the PPIase FKBP-type domain; it reads GDKVVIDFQG…IKKIMEGKLP (86 aa).

This sequence belongs to the FKBP-type PPIase family. Tig subfamily.

The protein resides in the cytoplasm. It carries out the reaction [protein]-peptidylproline (omega=180) = [protein]-peptidylproline (omega=0). In terms of biological role, involved in protein export. Acts as a chaperone by maintaining the newly synthesized protein in an open conformation. Functions as a peptidyl-prolyl cis-trans isomerase. The chain is Trigger factor from Legionella pneumophila subsp. pneumophila (strain Philadelphia 1 / ATCC 33152 / DSM 7513).